The primary structure comprises 2312 residues: Protein Ycf2 (2312 aa).

3 disordered regions span residues 170–191 (SSQL…GTED), 223–253 (TEIE…EMNN), and 942–1009 (KRKK…KRKE). Residues 232-242 (KGLSGSSSKSR) are compositionally biased toward low complexity. Composition is skewed to basic and acidic residues over residues 243–252 (LFTEGEKEMN) and 950–1007 (KRKE…PEKR). 1439-1446 (GSIGSGRS) contributes to the ATP binding site. Disordered stretches follow at residues 1513 to 1532 (YEDR…YEPG), 1857 to 1983 (LVGS…LLRP), and 2050 to 2166 (PAEE…DGFS). A compositionally biased stretch (acidic residues) spans 1863–1963 (TEEEVEGTEE…GEGTEDEEVE (101 aa)). The span at 1964–1976 (GTEKDSSQFDNDR) shows a compositional bias: basic and acidic residues. Composition is skewed to acidic residues over residues 2050–2067 (PAEE…EALE) and 2074–2149 (GEEE…ENDS).

It belongs to the Ycf2 family.

It is found in the plastid. It localises to the chloroplast stroma. In terms of biological role, probable ATPase of unknown function. Its presence in a non-photosynthetic plant (Epifagus virginiana) and experiments in tobacco indicate that it has an essential function which is probably not related to photosynthesis. This is Protein Ycf2 from Oenothera parviflora (Small-flowered evening primrose).